The following is a 581-amino-acid chain: Transcription factor GTE2 (581 aa).

A disordered region spans residues 130-153 (VKKTKTKKKKIGHGQKRSNPFATD). Residues 131-145 (KKTKTKKKKIGHGQK) show a composition bias toward basic residues. The 107-residue stretch at 169–275 (KVLKSMMTTC…SQFDVWFNPT (107 aa)) folds into the Bromo domain. Disordered regions lie at residues 329–399 (PLLP…KREM) and 470–581 (KRQG…KEAP). A compositionally biased stretch (pro residues) spans 346–365 (PSPPPSPVQPPPPPSPPPQP). Residues 389-470 (PKAKDPNKRE…NYRKMASKIK (82 aa)) enclose the NET domain. Composition is skewed to basic and acidic residues over residues 390–399 (KAKDPNKREM) and 493–503 (SAEKRGRKGGE). Over residues 504-517 (AGEEDVDIGEDIPV) the composition is skewed to acidic residues. Low complexity predominate over residues 530 to 564 (TAAAASGGSSSSGSFSSSGSSSSSDSESGSSSGSD).

The protein resides in the nucleus. The polypeptide is Transcription factor GTE2 (GTE2) (Arabidopsis thaliana (Mouse-ear cress)).